A 159-amino-acid polypeptide reads, in one-letter code: MIENVMKEGFITTSYDSVVNWAKTGSLWPMTFGLACCAVEMIHSAAARYDLARFGAEVFRASPRQADLMIVAGTLCNKMAPALRKVYDQMSEPRWVLSMGSCANGGGYYHYSYSVVRGCDRIVPVDVYVPGCPPTAEALIYGILQLQQKIRRSHTIARA.

Cys36, Cys37, Cys102, and Cys132 together coordinate [4Fe-4S] cluster.

This sequence belongs to the complex I 20 kDa subunit family. In terms of assembly, NDH-1 is composed of 14 different subunits. Subunits NuoB, C, D, E, F, and G constitute the peripheral sector of the complex. Requires [4Fe-4S] cluster as cofactor.

The protein localises to the cell inner membrane. The catalysed reaction is a quinone + NADH + 5 H(+)(in) = a quinol + NAD(+) + 4 H(+)(out). NDH-1 shuttles electrons from NADH, via FMN and iron-sulfur (Fe-S) centers, to quinones in the respiratory chain. Couples the redox reaction to proton translocation (for every two electrons transferred, four hydrogen ions are translocated across the cytoplasmic membrane), and thus conserves the redox energy in a proton gradient. The chain is NADH-quinone oxidoreductase subunit B from Verminephrobacter eiseniae (strain EF01-2).